We begin with the raw amino-acid sequence, 176 residues long: Co-chaperone protein HscB homolog (176 aa).

A J domain is found at 8 to 80 (DFFALFGLPV…LRRATYLLKL (73 aa)).

Belongs to the HscB family. Interacts with HscA and stimulates its ATPase activity.

In terms of biological role, co-chaperone involved in the maturation of iron-sulfur cluster-containing proteins. Seems to help targeting proteins to be folded toward HscA. The protein is Co-chaperone protein HscB homolog of Cupriavidus taiwanensis (strain DSM 17343 / BCRC 17206 / CCUG 44338 / CIP 107171 / LMG 19424 / R1) (Ralstonia taiwanensis (strain LMG 19424)).